The following is a 244-amino-acid chain: Nonsense-mediated decay protein 4 (244 aa).

The protein localises to the cytoplasm. Involved in nonsense-mediated decay of mRNAs containing premature stop codons. The protein is Nonsense-mediated decay protein 4 (NMD4) of Kluyveromyces lactis (strain ATCC 8585 / CBS 2359 / DSM 70799 / NBRC 1267 / NRRL Y-1140 / WM37) (Yeast).